A 935-amino-acid chain; its full sequence is uncharacterized protein (935 aa).

Disordered stretches follow at residues 1–32 (MDIG…QNNN), 74–228 (NNNN…YNNG), 265–287 (NNEN…NNNN), 342–376 (NQQK…SSKT), 394–414 (SPTQ…QQQY), 466–491 (KNIN…NNNI), 516–559 (PHQQ…TSTI), 727–755 (SPSS…ISPS), and 778–799 (GGGS…NVQN). The span at 74-227 (NNNNNTTNNN…NNNDDNIYNN (154 aa)) shows a compositional bias: low complexity. Residues 262–331 (KKNNNENKKK…NNINNNNNKI (70 aa)) adopt a coiled-coil conformation. Basic and acidic residues predominate over residues 265 to 274 (NNENKKKNND). Positions 275–287 (NENNNYPNFNNNN) are enriched in low complexity. Polar residues predominate over residues 367–376 (LSHNSESSKT). The span at 397 to 414 (QQQQQQQQQQQQQQQQQY) shows a compositional bias: low complexity. Over residues 522-559 (SSPTSSSTSTSSTTSSSSSSSSSSSSSSSSSTSSTSTI) the composition is skewed to low complexity. Positions 778 to 791 (GGGSSGGGGSGGGV) are enriched in gly residues.

This is an uncharacterized protein from Dictyostelium discoideum (Social amoeba).